We begin with the raw amino-acid sequence, 448 residues long: MRFDPKEIGEILEMLLFRELDIRAVTLSVNTLPAIRHRVSDTISALEELLEPYLKKLRPAVEKVASRLGVRIVTVRLAVSPVSIMLEPIGDAKSTVELAYFLDDLAGKYGVDMVGGFSAFEHAGVSRGDRALMEGLAEALNGTSRLAGFLNVASTMTGINLDAVRKSADIILSLKPHAAARFAVTANLPEDVPFMPGAYHGLGLPDAVINIAVSGPGVVEAVVRNLPEADARTLHDAIKRAAFKITRLGELVGREVSKELGVPFGAVDLSVAPSPKVGDSVAAILEAMGLPRVGSPGSVFALALFVDAVKKGGAMAVSNIGGLSGAFIPVSEDAVMAQAAAEGAVTLDTLKAMAAVCNTGLDMIGIPGDASADVVAAIIADVMALAVYLDKPLGVRLVPVPGGKPGDYYDLGGLYGKVAVMEISRYSKIPLMSRGGTAPPGVERLKKG.

This sequence belongs to the UPF0210 family.

The protein is UPF0210 protein PAE3581 of Pyrobaculum aerophilum (strain ATCC 51768 / DSM 7523 / JCM 9630 / CIP 104966 / NBRC 100827 / IM2).